The sequence spans 121 residues: MKWWKLSGQILLLFCFAWTGEWIAKQVHLPIPGSIIGIFLLLISLKFNLVKKEWIQDGADFLLKELILFFIPSAVAVIRYKDTLSQYGIDLIFIIMISTLCVTLVTGILTELLLKRKGSVQ.

A run of 3 helical transmembrane segments spans residues 27–47 (VHLP…SLKF), 58–78 (GADF…VAVI), and 89–109 (IDLI…TGIL).

Belongs to the CidA/LrgA family. CidA subfamily.

It is found in the cell membrane. Functionally, increases the activity of extracellular murein hydrolases possibly by mediating their export via hole formation. Inhibited by the antiholin-like proteins LrgAB. In an unstressed cell, the LrgAB products probably inhibit the function of the CidA protein. When a cell is stressed by the addition of antibiotics or by other factors in the environment, CidA possibly oligomerizes within the bacterial cell membrane, creating lesions that disrupt the proton motive force, which in turn results in loss of cell viability. These lesions are also hypothesized to regulate the subsequent cell lysis by either allowing the murein hydrolases access to the cell wall substrate and/or regulating their activity by a possible change in the cell wall pH that results from loss of membrane potential. This is Holin-like protein CidA from Bacillus cytotoxicus (strain DSM 22905 / CIP 110041 / 391-98 / NVH 391-98).